The sequence spans 438 residues: 2-(3-amino-3-carboxypropyl)histidine synthase subunit 1 (438 aa).

The interval 7 to 29 (SGAAEQGGRDGPGRGRAPRGRVA) is disordered. [4Fe-4S] cluster-binding residues include Cys110, Cys214, and Cys342. Positions 391-421 (VNHGQDRRPHAPGRPARGKVQEGSARPPSAV) are disordered.

It belongs to the DPH1/DPH2 family. DPH1 subfamily. Component of the 2-(3-amino-3-carboxypropyl)histidine synthase complex composed of DPH1, DPH2, DPH3 and a NADH-dependent reductase. Interacts with DPH2. Interacts with RBM8A. Requires [4Fe-4S] cluster as cofactor. Expressed in heart, brain, placenta, lung, liver, skeletal muscle, kidney, pancreas, spleen, thymus, mammary gland, colon, small intestine, testis and ovary. Reduced expression in primary breast and ovarian tumors.

The protein localises to the nucleus. It is found in the cytoplasm. It catalyses the reaction L-histidyl-[translation elongation factor 2] + S-adenosyl-L-methionine = 2-[(3S)-amino-3-carboxypropyl]-L-histidyl-[translation elongation factor 2] + S-methyl-5'-thioadenosine + H(+). It functions in the pathway protein modification; peptidyl-diphthamide biosynthesis. Its function is as follows. Catalyzes the first step of diphthamide biosynthesis, a post-translational modification of histidine which occurs in elongation factor 2. DPH1 and DPH2 transfer a 3-amino-3-carboxypropyl (ACP) group from S-adenosyl-L-methionine (SAM) to a histidine residue, the reaction is assisted by a reduction system comprising DPH3 and a NADH-dependent reductase. Acts as a tumor suppressor. This is 2-(3-amino-3-carboxypropyl)histidine synthase subunit 1 from Homo sapiens (Human).